The primary structure comprises 602 residues: 4-hydroxy-3-methylbut-2-en-1-yl diphosphate synthase (flavodoxin) (602 aa).

[4Fe-4S] cluster-binding residues include Cys508, Cys511, Cys543, and Glu550.

It belongs to the IspG family. [4Fe-4S] cluster is required as a cofactor.

The catalysed reaction is (2E)-4-hydroxy-3-methylbut-2-enyl diphosphate + oxidized [flavodoxin] + H2O + 2 H(+) = 2-C-methyl-D-erythritol 2,4-cyclic diphosphate + reduced [flavodoxin]. It participates in isoprenoid biosynthesis; isopentenyl diphosphate biosynthesis via DXP pathway; isopentenyl diphosphate from 1-deoxy-D-xylulose 5-phosphate: step 5/6. In terms of biological role, converts 2C-methyl-D-erythritol 2,4-cyclodiphosphate (ME-2,4cPP) into 1-hydroxy-2-methyl-2-(E)-butenyl 4-diphosphate. The protein is 4-hydroxy-3-methylbut-2-en-1-yl diphosphate synthase (flavodoxin) of Chlamydia trachomatis serovar L2b (strain UCH-1/proctitis).